The chain runs to 443 residues: MLKSAKGTWITDWNPEDPKRWDPALAWRTLWITTFNLTLSFITWYVVSALVVRLPKVGFELSTTQLFWLTAMPGLAGGTLRIIWTFLPPILGTRHLVTFSTLLLLIPLLGWGFAVQNTGTPYWVLLLLAFLAGIGGGHFSGYMPSTSYFFPKRLQGTALGLQAGIGNFGVSIVQFVTPWIIGFALFGSLLGGPQTFTPKPGVSQPIWLQNATFAWVPFVLLGALLAWVYLRSVPIRANFREQFDIFRDKHTWIMTSLYIMTFGSFSGFSAIFPLLIREVYGKFEGAPDPLRYAFLGPLVGSLARVIAGPISDRLGGAIVTQVSAIGIFLSALLVTLYTRPTSLDQFPMFVVAMLLIFFFSGVGNASTFKQMPMIFPPRQAGGVIGWTAAVAAYGPFLFSTLAAYTQQATGGFTAFFYGLMVFYAFNFFLNWYYYARKGAEKPC.

A run of 12 helical transmembrane segments spans residues 32–52, 66–86, 95–115, 123–143, 172–192, 210–230, 256–276, 292–312, 314–334, 346–366, 383–403, and 409–429; these read ITTFNLTLSFITWYVVSALVV, LFWLTAMPGLAGGTLRIIWTF, HLVTFSTLLLLIPLLGWGFAV, WVLLLLAFLAGIGGGHFSGYM, IVQFVTPWIIGFALFGSLLGG, NATFAWVPFVLLGALLAWVYL, SLYIMTFGSFSGFSAIFPLLI, YAFLGPLVGSLARVIAGPISD, LGGAIVTQVSAIGIFLSALLV, FPMFVVAMLLIFFFSGVGNAS, VIGWTAAVAAYGPFLFSTLAA, and TGGFTAFFYGLMVFYAFNFFL.

It belongs to the major facilitator superfamily. Nitrate/nitrite porter (TC 2.A.1.8) family.

Its subcellular location is the cell membrane. The enzyme catalyses nitrate(in) + nitrite(out) = nitrate(out) + nitrite(in). Functionally, probable nitrate/nitrite antiporter that may be involved in nitrate import and nitrite export during anaerobic growth. This Thermus thermophilus protein is Probable nitrate/nitrite antiporter NarK2.